An 890-amino-acid chain; its full sequence is Protein translocase subunit SecA (890 aa).

ATP-binding positions include Q85, 103-107 (GEGKT), and D491.

This sequence belongs to the SecA family. In terms of assembly, monomer and homodimer. Part of the essential Sec protein translocation apparatus which comprises SecA, SecYEG and auxiliary proteins SecDF. Other proteins may also be involved.

Its subcellular location is the cell membrane. The protein localises to the cytoplasm. It catalyses the reaction ATP + H2O + cellular proteinSide 1 = ADP + phosphate + cellular proteinSide 2.. Functionally, part of the Sec protein translocase complex. Interacts with the SecYEG preprotein conducting channel. Has a central role in coupling the hydrolysis of ATP to the transfer of proteins into and across the cell membrane, serving as an ATP-driven molecular motor driving the stepwise translocation of polypeptide chains across the membrane. The protein is Protein translocase subunit SecA of Mycoplasmoides gallisepticum (strain R(low / passage 15 / clone 2)) (Mycoplasma gallisepticum).